A 64-amino-acid polypeptide reads, in one-letter code: Large ribosomal subunit protein bL35 (64 aa).

Basic residues predominate over residues 1-15 (MPKQKSHSGASKRFR). Residues 1-22 (MPKQKSHSGASKRFRVTGSGKV) are disordered.

The protein belongs to the bacterial ribosomal protein bL35 family.

The protein is Large ribosomal subunit protein bL35 of Frankia casuarinae (strain DSM 45818 / CECT 9043 / HFP020203 / CcI3).